Reading from the N-terminus, the 92-residue chain is YcgL domain-containing protein Sputcn32_1766 (92 aa).

The region spanning 1-85 (MLCTVYKSTR…PQVNLLAEHK (85 aa)) is the YcgL domain.

The sequence is that of YcgL domain-containing protein Sputcn32_1766 from Shewanella putrefaciens (strain CN-32 / ATCC BAA-453).